The sequence spans 314 residues: Malate dehydrogenase (314 aa).

NAD(+) is bound by residues Gly-11–Gly-16 and Asp-35. Residues Arg-84 and Arg-90 each coordinate substrate. NAD(+) is bound by residues Asn-97 and Ile-120–Asn-122. 2 residues coordinate substrate: Asn-122 and Arg-153. His-177 (proton acceptor) is an active-site residue.

This sequence belongs to the LDH/MDH superfamily. MDH type 3 family.

It catalyses the reaction (S)-malate + NAD(+) = oxaloacetate + NADH + H(+). Its function is as follows. Catalyzes the reversible oxidation of malate to oxaloacetate. In Rickettsia bellii (strain RML369-C), this protein is Malate dehydrogenase.